The following is a 609-amino-acid chain: Glutamine--fructose-6-phosphate aminotransferase [isomerizing] (609 aa).

Residue C2 is the Nucleophile; for GATase activity of the active site. A Glutamine amidotransferase type-2 domain is found at 2–218 (CGIVGAVAQR…EGDIAEVTRR (217 aa)). SIS domains follow at residues 286–426 (AAKL…LKGV) and 458–599 (LAED…VDQP). K604 functions as the For Fru-6P isomerization activity in the catalytic mechanism.

Homodimer.

It is found in the cytoplasm. The enzyme catalyses D-fructose 6-phosphate + L-glutamine = D-glucosamine 6-phosphate + L-glutamate. Catalyzes the first step in hexosamine metabolism, converting fructose-6P into glucosamine-6P using glutamine as a nitrogen source. The polypeptide is Glutamine--fructose-6-phosphate aminotransferase [isomerizing] (Photorhabdus laumondii subsp. laumondii (strain DSM 15139 / CIP 105565 / TT01) (Photorhabdus luminescens subsp. laumondii)).